The chain runs to 456 residues: MNSSDEEKQLQLITSLKEQAIGEYEDLRAENQKTKEKCDKIRQERDEAVKKLEEFQKISHMVIEEVNFMQNHLEIEKTCRESAEALATKLNKENKTLKRISMLYMAKLGPDVITEEINIDDEDSTTDTDGAAETCVSVQCQKQIKELRDQIVSVQEEKKILAIELENLKSKLVEVIEEVNKVKQEKAVLNSEVLEQRKVLEKCNRVSMLAVEEYEEMQVNLELEKDLRKKAESFAQEMFIEQNKLKRQSHLLLQSSVPDQQLSKALDENAKLTQQLEEERIQHQQKVKELKEQLENETLHKEIHNLKQQLELLEEDKKELELKYQNSEEKARNLKHSVDELQKRVNQSENSVPPPPPPPPPLPPPPPNPIRSFMSMIRKRSHPSGSGAKKEKATQPETPEEVTDLKRQAVEEMMDRIKKGVHLRPVNQTARPKTKPESSKGCESAVDELKGILASQ.

M1 carries the post-translational modification N-acetylmethionine. Phosphoserine occurs at positions 3 and 4. A coiled-coil region spans residues 7–353; it reads EKQLQLITSL…RVNQSENSVP (347 aa). 2 positions are modified to phosphoserine; by PAK1: S101 and S249. Disordered regions lie at residues 343–405 and 418–445; these read KRVN…VTDL and KKGV…CESA. Residues 352–369 are compositionally biased toward pro residues; it reads VPPPPPPPPPLPPPPPNP. The residue at position 375 (S375) is a Phosphoserine.

It belongs to the shootin family. In terms of assembly, interacts with L1CAM; this interaction occurs in axonal growth cones. Interacts with actin filament retrograde flow; this interaction is enhanced in a netrin-1- and PAK1-dependent manner and promotes F-actin-substrate coupling and concomitant formation of traction forces at axonal growth cones. Interacts with RUFY3. Interacts with PFN2. Interacts (via N-terminus) with KIF20B; this interaction is direct and promotes the association of SHTN1 to microtubules in primary neurons. Associates with microtubule. Phosphorylated on Ser-101 and Ser-249 by PAK1 through a CDC42- and RAC1-dependent signaling pathway, which enhances its association with F-actin retrograde flow in filopodia and lamellipodia of axonal growth cones. Phosphorylation on Ser-101 and Ser-249 is increased by netrin-1.

Its subcellular location is the perikaryon. The protein localises to the cell projection. It is found in the axon. It localises to the growth cone. The protein resides in the cytoplasm. Its subcellular location is the cytoskeleton. The protein localises to the filopodium. It is found in the lamellipodium. Functionally, involved in the generation of internal asymmetric signals required for neuronal polarization and neurite outgrowth. Mediates netrin-1-induced F-actin-substrate coupling or 'clutch engagement' within the axon growth cone through activation of CDC42, RAC1 and PAK1-dependent signaling pathway, thereby converting the F-actin retrograde flow into traction forces, concomitantly with filopodium extension and axon outgrowth. Plays a role in cytoskeletal organization by regulating the subcellular localization of phosphoinositide 3-kinase (PI3K) activity at the axonal growth cone. Also plays a role in regenerative neurite outgrowth. In the developing cortex, cooperates with KIF20B to promote both the transition from the multipolar to the bipolar stage and the radial migration of cortical neurons from the ventricular zone toward the superficial layer of the neocortex. Involved in the accumulation of phosphatidylinositol 3,4,5-trisphosphate (PIP3) in the growth cone of primary hippocampal neurons. This Pongo abelii (Sumatran orangutan) protein is Shootin-1.